The sequence spans 554 residues: SWRKMATAEKQKHDGRVRIGHYILGDTLGVGTFGKVKVGKHELTGHKVAVKILNRQKIRSLDVVGKIRREIQNLKLFRHPHIIKLYQVISTPSDIFMVMEYVSGGELFDYICKNGRLDEKESRRLFQQILSGVDYCHRHMVVHRDLKPENVLLDAHMNAKIADFGLSNMMSDGEFLRTSCGSPNYAAPEVISGRLYAGPEVDIWSSGVILYALLCGTLPFDDDHVPTLFKKICDGIFYTPQYLNPSVISLLKHMLQVDPMKRATIKDIREHEWFKQDLPKYLFPEDPSYSSTMIDDEALKEVCEKFECSEEEVLSCLYNRNHQDPLAVAYHLIIDNRRIMNEAKDFYLATSPPDSFLDDHHLTRPHPERVPFLVAETPRARHTLDELNPQKSKHQGVRKAKWHLGIRSQSRPNDIMAEVCRAIKQLDYEWKVVNPYYLRVRRKNPVTSTYSKMSLQLYQVDSRTYLLDFRSIDDEITEAKSGTATPQRSGSVSNYRSCQRSDSDAEAQGKSSEVSLTSSVTSLDSSPVDLTPRPGSHTIEFFEMCANLIKILAQ.

In terms of domain architecture, Protein kinase spans 22–274; that stretch reads YILGDTLGVG…IKDIREHEWF (253 aa). T27 is modified (phosphothreonine). Residues 28–36 and K51 contribute to the ATP site; that span reads LGVGTFGKV. The active-site Proton acceptor is D145. At T178 the chain carries Phosphothreonine; by LKB1 and CaMKK2. A phosphothreonine mark is found at T264 and T350. Residues 297-376 are AIS; it reads EALKEVCEKF…PERVPFLVAE (80 aa). S351 is subject to Phosphoserine. Residue S355 is modified to Phosphoserine; by ULK1. T363 bears the Phosphothreonine; by ULK1 mark. Phosphothreonine is present on T377. S392 carries the phosphoserine; by ULK1 modification. S462 is modified (phosphoserine). Positions 480–500 are enriched in polar residues; sequence KSGTATPQRSGSVSNYRSCQR. A disordered region spans residues 480-531; that stretch reads KSGTATPQRSGSVSNYRSCQRSDSDAEAQGKSSEVSLTSSVTSLDSSPVDLT. Position 481 is a phosphoserine; by ULK1 (S481). At T483 the chain carries Phosphothreonine; by ULK1. T485 bears the Phosphothreonine mark. 4 positions are modified to phosphoserine: S491, S503, S519, and S522. Residues 511 to 530 show a composition bias toward low complexity; sequence SSEVSLTSSVTSLDSSPVDL.

Belongs to the protein kinase superfamily. CAMK Ser/Thr protein kinase family. SNF1 subfamily. In terms of assembly, AMPK is a heterotrimer of an alpha catalytic subunit (PRKAA1 or PRKAA2), a beta (PRKAB1 or PRKAB2) and a gamma non-catalytic subunits (PRKAG1, PRKAG2 or PRKAG3). Interacts with FNIP1 and FNIP2. Mg(2+) is required as a cofactor. In terms of processing, ubiquitinated. Phosphorylated at Thr-183 by STK11/LKB1 in complex with STE20-related adapter-alpha (STRADA) pseudo kinase and CAB39. Also phosphorylated at Thr-183 by CAMKK2; triggered by a rise in intracellular calcium ions, without detectable changes in the AMP/ATP ratio. CAMKK1 can also phosphorylate Thr-183, but at a much lower level. Dephosphorylated by protein phosphatase 2A and 2C (PP2A and PP2C). Phosphorylated by ULK1 and ULK2; leading to negatively regulate AMPK activity and suggesting the existence of a regulatory feedback loop between ULK1, ULK2 and AMPK. Dephosphorylated by PPM1A and PPM1B. Post-translationally, glycosylated; O-GlcNAcylated by OGT, promoting the AMP-activated protein kinase (AMPK) activity.

It localises to the cytoplasm. The protein resides in the nucleus. The catalysed reaction is L-seryl-[protein] + ATP = O-phospho-L-seryl-[protein] + ADP + H(+). It carries out the reaction L-threonyl-[protein] + ATP = O-phospho-L-threonyl-[protein] + ADP + H(+). The enzyme catalyses L-seryl-[acetyl-CoA carboxylase] + ATP = O-phospho-L-seryl-[acetyl-CoA carboxylase] + ADP + H(+). It catalyses the reaction L-seryl-[3-hydroxy-3-methylglutaryl-coenzyme A reductase] + ATP = O-phospho-L-seryl-[3-hydroxy-3-methylglutaryl-coenzyme A reductase] + ADP + H(+). The catalysed reaction is L-seryl-[tau protein] + ATP = O-phospho-L-seryl-[tau protein] + ADP + H(+). It carries out the reaction L-threonyl-[tau protein] + ATP = O-phospho-L-threonyl-[tau protein] + ADP + H(+). Its activity is regulated as follows. Activated by phosphorylation on Thr-183. Binding of AMP to non-catalytic gamma subunit (PRKAG1, PRKAG2 or PRKAG3) results in allosteric activation, inducing phosphorylation on Thr-183. AMP-binding to gamma subunit also sustains activity by preventing dephosphorylation of Thr-183. ADP also stimulates Thr-183 phosphorylation, without stimulating already phosphorylated AMPK. ATP promotes dephosphorylation of Thr-183, rendering the enzyme inactive. Under physiological conditions AMPK mainly exists in its inactive form in complex with ATP, which is much more abundant than AMP. Selectively inhibited by compound C (6-[4-(2-Piperidin-1-yl-ethoxy)-phenyl)]-3-pyridin-4-yl-pyyrazolo[1,5-a] pyrimidine. Activated by resveratrol, a natural polyphenol present in red wine, and S17834, a synthetic polyphenol. Catalytic subunit of AMP-activated protein kinase (AMPK), an energy sensor protein kinase that plays a key role in regulating cellular energy metabolism. In response to reduction of intracellular ATP levels, AMPK activates energy-producing pathways and inhibits energy-consuming processes: inhibits protein, carbohydrate and lipid biosynthesis, as well as cell growth and proliferation. AMPK acts via direct phosphorylation of metabolic enzymes, and by longer-term effects via phosphorylation of transcription regulators. Regulates lipid synthesis by phosphorylating and inactivating lipid metabolic enzymes such as ACACA, ACACB, GYS1, HMGCR and LIPE; regulates fatty acid and cholesterol synthesis by phosphorylating acetyl-CoA carboxylase (ACACA and ACACB) and hormone-sensitive lipase (LIPE) enzymes, respectively. Promotes lipolysis of lipid droplets by mediating phosphorylation of isoform 1 of CHKA (CHKalpha2). Regulates insulin-signaling and glycolysis by phosphorylating IRS1, PFKFB2 and PFKFB3. AMPK stimulates glucose uptake in muscle by increasing the translocation of the glucose transporter SLC2A4/GLUT4 to the plasma membrane, possibly by mediating phosphorylation of TBC1D4/AS160. Regulates transcription and chromatin structure by phosphorylating transcription regulators involved in energy metabolism such as CRTC2/TORC2, FOXO3, histone H2B, HDAC5, MEF2C, MLXIPL/ChREBP, EP300, HNF4A, p53/TP53, SREBF1, SREBF2 and PPARGC1A. Acts as a key regulator of glucose homeostasis in liver by phosphorylating CRTC2/TORC2, leading to CRTC2/TORC2 sequestration in the cytoplasm. In response to stress, phosphorylates 'Ser-36' of histone H2B (H2BS36ph), leading to promote transcription. Acts as a key regulator of cell growth and proliferation by phosphorylating FNIP1, TSC2, RPTOR, WDR24 and ATG1/ULK1: in response to nutrient limitation, negatively regulates the mTORC1 complex by phosphorylating RPTOR component of the mTORC1 complex and by phosphorylating and activating TSC2. Also phosphorylates and inhibits GATOR2 subunit WDR24 in response to nutrient limitation, leading to suppress glucose-mediated mTORC1 activation. In response to energetic stress, phosphorylates FNIP1, inactivating the non-canonical mTORC1 signaling, thereby promoting nuclear translocation of TFEB and TFE3, and inducing transcription of lysosomal or autophagy genes. In response to nutrient limitation, promotes autophagy by phosphorylating and activating ATG1/ULK1. In that process also activates WDR45/WIPI4. Phosphorylates CASP6, thereby preventing its autoprocessing and subsequent activation. In response to nutrient limitation, phosphorylates transcription factor FOXO3 promoting FOXO3 mitochondrial import. Also acts as a regulator of cellular polarity by remodeling the actin cytoskeleton; probably by indirectly activating myosin. AMPK also acts as a regulator of circadian rhythm by mediating phosphorylation of CRY1, leading to destabilize it. May regulate the Wnt signaling pathway by phosphorylating CTNNB1, leading to stabilize it. Also has tau-protein kinase activity: in response to amyloid beta A4 protein (APP) exposure, activated by CAMKK2, leading to phosphorylation of MAPT/TAU; however the relevance of such data remains unclear in vivo. Also phosphorylates CFTR, EEF2K, KLC1, NOS3 and SLC12A1. Regulates hepatic lipogenesis. Activated via SIRT3, represses sterol regulatory element-binding protein (SREBP) transcriptional activities and ATP-consuming lipogenesis to restore cellular energy balance. Upon stress, regulates mitochondrial fragmentation through phosphorylation of MTFR1L. This is 5'-AMP-activated protein kinase catalytic subunit alpha-1 (PRKAA1) from Pongo abelii (Sumatran orangutan).